We begin with the raw amino-acid sequence, 423 residues long: Histidine--tRNA ligase (423 aa).

The protein belongs to the class-II aminoacyl-tRNA synthetase family. In terms of assembly, homodimer.

The protein resides in the cytoplasm. The catalysed reaction is tRNA(His) + L-histidine + ATP = L-histidyl-tRNA(His) + AMP + diphosphate + H(+). The protein is Histidine--tRNA ligase of Haemophilus influenzae (strain 86-028NP).